A 581-amino-acid chain; its full sequence is Bifunctional lycopene cyclase/phytoene synthase (581 aa).

Residues 1-243 (MGFDYALVHL…IVFGQLAFDN (243 aa)) form a lycopene beta-cyclase region. Helical transmembrane passes span 3–23 (FDYA…LTLL), 35–55 (KVAF…SYLI), 65–85 (HVII…FFVV), 120–140 (LKRL…WFCV), 152–172 (ILIW…QFII), 173–193 (GLPF…LWIV), and 221–241 (IEEA…QLAF). Positions 250 to 581 (AFPHLFPDPS…RVLVAWRTLN (332 aa)) are phytoene synthase.

This sequence in the N-terminal section; belongs to the lycopene beta-cyclase family. The protein in the C-terminal section; belongs to the phytoene/squalene synthase family.

Its subcellular location is the membrane. The catalysed reaction is all-trans-lycopene = gamma-carotene. It catalyses the reaction gamma-carotene = all-trans-beta-carotene. It carries out the reaction 2 (2E,6E,10E)-geranylgeranyl diphosphate = 15-cis-phytoene + 2 diphosphate. It functions in the pathway carotenoid biosynthesis; beta-carotene biosynthesis. Its pathway is carotenoid biosynthesis; phytoene biosynthesis; all-trans-phytoene from geranylgeranyl diphosphate: step 1/1. Bifunctional enzyme that catalyzes the reactions from geranylgeranyl diphosphate to phytoene (phytoene synthase) and lycopene to beta-carotene via the intermediate gamma-carotene (lycopene cyclase). The sequence is that of Bifunctional lycopene cyclase/phytoene synthase from Leptosphaeria maculans (strain JN3 / isolate v23.1.3 / race Av1-4-5-6-7-8) (Blackleg fungus).